We begin with the raw amino-acid sequence, 245 residues long: Small ribosomal subunit protein uS3 (245 aa).

The region spanning 39–108 (IRNYIKKNYY…SVFVNVQEVK (70 aa)) is the KH type-2 domain.

The protein belongs to the universal ribosomal protein uS3 family. As to quaternary structure, part of the 30S ribosomal subunit. Forms a tight complex with proteins S10 and S14.

Binds the lower part of the 30S subunit head. Binds mRNA in the 70S ribosome, positioning it for translation. The protein is Small ribosomal subunit protein uS3 of Dictyoglomus turgidum (strain DSM 6724 / Z-1310).